A 688-amino-acid chain; its full sequence is Lectin-domain containing receptor kinase VI.3 (688 aa).

The first 14 residues, 1–14, serve as a signal peptide directing secretion; sequence MLVLFLLLTIPTRA. Over 15–306 the chain is Extracellular; it reads QRTTTETPKT…KRGYNSQVLA (292 aa). Residues 22 to 271 form a legume-lectin like region; it reads PKTEFIFRGF…AHYVMGWSFS (250 aa). A helical membrane pass occupies residues 307 to 327; it reads LIVALSGVTVILLALLFFFVM. At 328 to 688 the chain is on the cytoplasmic side; the sequence is YKKRLQQGEV…VSSSSVISGR (361 aa). In terms of domain architecture, Protein kinase spans 361-640; the sequence is FKENRIVGTG…LNGDDDVPEI (280 aa). Residues 367–375 and K391 contribute to the ATP site; that span reads VGTGGFGTV. D490 functions as the Proton acceptor in the catalytic mechanism. Residues 662 to 688 form a disordered region; it reads VSSDRASSSVPSFSVTRVSSSSVISGR.

This sequence in the C-terminal section; belongs to the protein kinase superfamily. Ser/Thr protein kinase family. The protein in the N-terminal section; belongs to the leguminous lectin family.

Its subcellular location is the cell membrane. The enzyme catalyses L-seryl-[protein] + ATP = O-phospho-L-seryl-[protein] + ADP + H(+). It carries out the reaction L-threonyl-[protein] + ATP = O-phospho-L-threonyl-[protein] + ADP + H(+). In terms of biological role, involved in negative regulation of abscisic acid response in seed germination. The sequence is that of Lectin-domain containing receptor kinase VI.3 (LECRK63) from Arabidopsis thaliana (Mouse-ear cress).